The following is a 188-amino-acid chain: Elongation factor P (188 aa).

The protein belongs to the elongation factor P family.

The protein localises to the cytoplasm. It functions in the pathway protein biosynthesis; polypeptide chain elongation. Its function is as follows. Involved in peptide bond synthesis. Stimulates efficient translation and peptide-bond synthesis on native or reconstituted 70S ribosomes in vitro. Probably functions indirectly by altering the affinity of the ribosome for aminoacyl-tRNA, thus increasing their reactivity as acceptors for peptidyl transferase. In Phocaeicola vulgatus (strain ATCC 8482 / DSM 1447 / JCM 5826 / CCUG 4940 / NBRC 14291 / NCTC 11154) (Bacteroides vulgatus), this protein is Elongation factor P.